Reading from the N-terminus, the 506-residue chain is 2,3-bisphosphoglycerate-independent phosphoglycerate mutase (506 aa).

Mn(2+)-binding residues include Asp-13 and Ser-63. The active-site Phosphoserine intermediate is the Ser-63. Residues His-124, 153 to 154, Arg-183, Arg-189, 254 to 257, and Lys-330 contribute to the substrate site; these read RD and RADR. Mn(2+)-binding residues include Asp-396, His-400, Asp-437, His-438, and His-456.

It belongs to the BPG-independent phosphoglycerate mutase family. In terms of assembly, monomer. Requires Mn(2+) as cofactor.

The catalysed reaction is (2R)-2-phosphoglycerate = (2R)-3-phosphoglycerate. It participates in carbohydrate degradation; glycolysis; pyruvate from D-glyceraldehyde 3-phosphate: step 3/5. In terms of biological role, catalyzes the interconversion of 2-phosphoglycerate and 3-phosphoglycerate. The chain is 2,3-bisphosphoglycerate-independent phosphoglycerate mutase from Cereibacter sphaeroides (strain ATCC 17029 / ATH 2.4.9) (Rhodobacter sphaeroides).